Here is a 275-residue protein sequence, read N- to C-terminus: Putative phosphoenolpyruvate synthase regulatory protein (275 aa).

157-164 contributes to the ADP binding site; the sequence is GVSRCGKT.

Belongs to the pyruvate, phosphate/water dikinase regulatory protein family. PSRP subfamily.

It carries out the reaction [pyruvate, water dikinase] + ADP = [pyruvate, water dikinase]-phosphate + AMP + H(+). It catalyses the reaction [pyruvate, water dikinase]-phosphate + phosphate + H(+) = [pyruvate, water dikinase] + diphosphate. In terms of biological role, bifunctional serine/threonine kinase and phosphorylase involved in the regulation of the phosphoenolpyruvate synthase (PEPS) by catalyzing its phosphorylation/dephosphorylation. This Bordetella pertussis (strain Tohama I / ATCC BAA-589 / NCTC 13251) protein is Putative phosphoenolpyruvate synthase regulatory protein.